The chain runs to 677 residues: MSEPRKILVTSALPYANGSIHLGHMLEYIQTDMWVRFQKMRGNQAVYVCADDAHGSAIMLRAEREGITSEQLIDAVRAEHMGDFADFLVDFDNYHSTHSEENRELSSAIYLKLRDAGHIDTRPVTQYFDPEKQMFLADRFIKGTCPKCGTADQYGDNCEACGATYAPTELKDPKSAISGATPVLKESLHYFFKLPDFEAMLKQWTRSGALQESVANKLAEWLDSGLQQWDISRDAPYFGFEIPDAPGKYFYVWLDAPIGYMASFKNLCARRPELDFDAFWGKDSSAELYHFIGKDIVNFHALFWPAMLEGAGYRKPTALNVHGYLTVNGQKMSKSRGTFVKARTYLDHLDPEYLRYYYASKLGRGVEDLDLNLEDFVQKVNSDLVGKVVNIASRCAGFIHKGNAGVLVGADPAPELLAAFREAAPGIAEAYEARDFNRAMREIMALADRANAWIAEQAPWALAKQEGQQDKVQAVCGLGINLFRQLVIFLKPVLPKLAAAAEAFLNVAPLTWADHRTLLANHQLNPFQPLMTRIEPAKVEAMIEASKEDLAAASQPAGNGELVKEPIAAEIDFDAFAAVDLRIALIEKCEFVEGADKLLRLSLDIGDAKRNVFSGIKSAYPDPSALEGRLTLYVANLAPRKMKFGVSEGMVLAAGPGGEEIYLLSPDSGAKPGQRVK.

The 'HIGH' region motif lies at 14–24; sequence PYANGSIHLGH. The Zn(2+) site is built by C145, C148, C158, and C161. The 'KMSKS' region signature appears at 331–335; sequence KMSKS. Residue K334 participates in ATP binding. Residues 575-677 form the tRNA-binding domain; that stretch reads AFAAVDLRIA…SGAKPGQRVK (103 aa).

Belongs to the class-I aminoacyl-tRNA synthetase family. MetG type 1 subfamily. As to quaternary structure, homodimer. It depends on Zn(2+) as a cofactor.

It localises to the cytoplasm. The catalysed reaction is tRNA(Met) + L-methionine + ATP = L-methionyl-tRNA(Met) + AMP + diphosphate. Its function is as follows. Is required not only for elongation of protein synthesis but also for the initiation of all mRNA translation through initiator tRNA(fMet) aminoacylation. This Pseudomonas aeruginosa (strain LESB58) protein is Methionine--tRNA ligase.